Reading from the N-terminus, the 375-residue chain is N-acetyldiaminopimelate deacetylase (375 aa).

Residue Asp69 is part of the active site. Glu128 acts as the Proton acceptor in catalysis.

The protein belongs to the peptidase M20A family. N-acetyldiaminopimelate deacetylase subfamily.

It carries out the reaction N-acetyl-(2S,6S)-2,6-diaminopimelate + H2O = (2S,6S)-2,6-diaminopimelate + acetate. It participates in amino-acid biosynthesis; L-lysine biosynthesis via DAP pathway; LL-2,6-diaminopimelate from (S)-tetrahydrodipicolinate (acetylase route): step 3/3. Its function is as follows. Catalyzes the conversion of N-acetyl-diaminopimelate to diaminopimelate and acetate. The protein is N-acetyldiaminopimelate deacetylase of Streptococcus suis (strain 05ZYH33).